The following is a 466-amino-acid chain: UDP-N-acetylmuramoylalanine--D-glutamate ligase (466 aa).

An ATP-binding site is contributed by 128–134 (GTNGKST).

It belongs to the MurCDEF family.

The protein localises to the cytoplasm. It catalyses the reaction UDP-N-acetyl-alpha-D-muramoyl-L-alanine + D-glutamate + ATP = UDP-N-acetyl-alpha-D-muramoyl-L-alanyl-D-glutamate + ADP + phosphate + H(+). The protein operates within cell wall biogenesis; peptidoglycan biosynthesis. Cell wall formation. Catalyzes the addition of glutamate to the nucleotide precursor UDP-N-acetylmuramoyl-L-alanine (UMA). This is UDP-N-acetylmuramoylalanine--D-glutamate ligase from Bartonella henselae (strain ATCC 49882 / DSM 28221 / CCUG 30454 / Houston 1) (Rochalimaea henselae).